The sequence spans 449 residues: tRNA-2-methylthio-N(6)-dimethylallyladenosine synthase (449 aa).

The MTTase N-terminal domain maps to Lys-3–Ser-124. Cys-12, Cys-48, Cys-87, Cys-163, Cys-167, and Cys-170 together coordinate [4Fe-4S] cluster. In terms of domain architecture, Radical SAM core spans Lys-149 to Glu-380. The region spanning Gln-383–Ala-447 is the TRAM domain.

It belongs to the methylthiotransferase family. MiaB subfamily. In terms of assembly, monomer. It depends on [4Fe-4S] cluster as a cofactor.

Its subcellular location is the cytoplasm. It catalyses the reaction N(6)-dimethylallyladenosine(37) in tRNA + (sulfur carrier)-SH + AH2 + 2 S-adenosyl-L-methionine = 2-methylsulfanyl-N(6)-dimethylallyladenosine(37) in tRNA + (sulfur carrier)-H + 5'-deoxyadenosine + L-methionine + A + S-adenosyl-L-homocysteine + 2 H(+). Its function is as follows. Catalyzes the methylthiolation of N6-(dimethylallyl)adenosine (i(6)A), leading to the formation of 2-methylthio-N6-(dimethylallyl)adenosine (ms(2)i(6)A) at position 37 in tRNAs that read codons beginning with uridine. This chain is tRNA-2-methylthio-N(6)-dimethylallyladenosine synthase, found in Orientia tsutsugamushi (strain Ikeda) (Rickettsia tsutsugamushi).